Consider the following 434-residue polypeptide: Adenylosuccinate synthetase (434 aa).

GTP is bound by residues 22–28 (GDEGKGK) and 50–52 (GHT). Catalysis depends on aspartate 23, which acts as the Proton acceptor. The Mg(2+) site is built by aspartate 23 and glycine 50. IMP contacts are provided by residues 23-26 (DEGK), 48-51 (NAGH), threonine 139, arginine 153, glutamine 234, threonine 249, and arginine 313. Histidine 51 serves as the catalytic Proton donor. Residue 309–315 (ATTGRKR) participates in substrate binding. Residues arginine 315, 341–343 (KLD), and 423–425 (SVG) contribute to the GTP site.

This sequence belongs to the adenylosuccinate synthetase family. In terms of assembly, homodimer. Mg(2+) serves as cofactor.

It localises to the cytoplasm. It carries out the reaction IMP + L-aspartate + GTP = N(6)-(1,2-dicarboxyethyl)-AMP + GDP + phosphate + 2 H(+). Its pathway is purine metabolism; AMP biosynthesis via de novo pathway; AMP from IMP: step 1/2. In terms of biological role, plays an important role in the de novo pathway of purine nucleotide biosynthesis. Catalyzes the first committed step in the biosynthesis of AMP from IMP. This Chlorobium limicola (strain DSM 245 / NBRC 103803 / 6330) protein is Adenylosuccinate synthetase.